The chain runs to 432 residues: 5-methylthioadenosine/S-adenosylhomocysteine deaminase (432 aa).

Zn(2+)-binding residues include His62 and His64. Substrate-binding residues include Glu91 and His184. His211 is a binding site for Zn(2+). Positions 214 and 299 each coordinate substrate. Position 299 (Asp299) interacts with Zn(2+).

This sequence belongs to the metallo-dependent hydrolases superfamily. MTA/SAH deaminase family. Zn(2+) serves as cofactor.

The catalysed reaction is S-adenosyl-L-homocysteine + H2O + H(+) = S-inosyl-L-homocysteine + NH4(+). The enzyme catalyses S-methyl-5'-thioadenosine + H2O + H(+) = S-methyl-5'-thioinosine + NH4(+). Functionally, catalyzes the deamination of 5-methylthioadenosine and S-adenosyl-L-homocysteine into 5-methylthioinosine and S-inosyl-L-homocysteine, respectively. Is also able to deaminate adenosine. The polypeptide is 5-methylthioadenosine/S-adenosylhomocysteine deaminase (Haloarcula marismortui (strain ATCC 43049 / DSM 3752 / JCM 8966 / VKM B-1809) (Halobacterium marismortui)).